The following is a 311-amino-acid chain: Large ribosomal subunit protein uL22 (311 aa).

It belongs to the universal ribosomal protein uL22 family. Part of the 50S ribosomal subunit.

In terms of biological role, this protein binds specifically to 23S rRNA; its binding is stimulated by other ribosomal proteins, e.g. L4, L17, and L20. It is important during the early stages of 50S assembly. It makes multiple contacts with different domains of the 23S rRNA in the assembled 50S subunit and ribosome. Its function is as follows. The globular domain of the protein is located near the polypeptide exit tunnel on the outside of the subunit, while an extended beta-hairpin is found that lines the wall of the exit tunnel in the center of the 70S ribosome. The chain is Large ribosomal subunit protein uL22 (rplV) from Ureaplasma parvum serovar 3 (strain ATCC 27815 / 27 / NCTC 11736).